The primary structure comprises 37 residues: Cytochrome b6-f complex subunit 5 (37 aa).

Residues 5–25 (FLFGIVLGLIPITLAGLFVTA) traverse the membrane as a helical segment.

Belongs to the PetG family. In terms of assembly, the 4 large subunits of the cytochrome b6-f complex are cytochrome b6, subunit IV (17 kDa polypeptide, PetD), cytochrome f and the Rieske protein, while the 4 small subunits are PetG, PetL, PetM and PetN. The complex functions as a dimer.

The protein resides in the plastid thylakoid membrane. Component of the cytochrome b6-f complex, which mediates electron transfer between photosystem II (PSII) and photosystem I (PSI), cyclic electron flow around PSI, and state transitions. PetG is required for either the stability or assembly of the cytochrome b6-f complex. The chain is Cytochrome b6-f complex subunit 5 from Cuscuta reflexa (Southern Asian dodder).